Here is a 334-residue protein sequence, read N- to C-terminus: Nucleoid-associated protein PMI0825 (334 aa).

Belongs to the YejK family.

Its subcellular location is the cytoplasm. It localises to the nucleoid. In Proteus mirabilis (strain HI4320), this protein is Nucleoid-associated protein PMI0825.